The primary structure comprises 347 residues: Rhodopsin (347 aa).

Over 1 to 33 (TEGPDFYIPMVNTTGVVRSPYEYPQYYLVNPAA) the chain is Extracellular. Asparagine 12 is a glycosylation site (N-linked (GlcNAc...) asparagine). A helical membrane pass occupies residues 34-58 (FAVLGAYMFFLIIIGFPINFLTLYV). At 59-70 (TLEHKKLRTPLN) the chain is on the cytoplasmic side. A helical transmembrane segment spans residues 71 to 93 (YILLNLAVADLFMVIGGFTTTMY). Residues 94–107 (SSMHGYFVLGRLGC) lie on the Extracellular side of the membrane. A disulfide bridge connects residues cysteine 107 and cysteine 184. Residues 108–130 (NIEGFFATLGGMISLWSLAVLAI) traverse the membrane as a helical segment. The short motif at 131–133 (ERW) is the 'Ionic lock' involved in activated form stabilization element. The Cytoplasmic segment spans residues 131-149 (ERWVVVCKPISNFRFGENH). A helical transmembrane segment spans residues 150-170 (AIMGVSLTWVMALACTVPPLV). The Extracellular segment spans residues 171–199 (GWSRYIPEGMQCACGIDYYTRAEGYNNES). Asparagine 197 carries an N-linked (GlcNAc...) asparagine glycan. The chain crosses the membrane as a helical span at residues 200–221 (FVIYMFTFHFLFPMFIIFFCYG). At 222 to 249 (RLLCAVKEAAAAQQESETTQRAEREVTR) the chain is on the cytoplasmic side. Residues 250 to 271 (MVILMVIGYLVCWLPYASVAWF) form a helical membrane-spanning segment. Over 272-283 (IFTHKGSEFGPL) the chain is Extracellular. A helical transmembrane segment spans residues 284–305 (FMAVPSFFAKSSSIYNPIIYIC). Lysine 293 is modified (N6-(retinylidene)lysine). Over 306-347 (MNKQFRQCMITTLFCGKNPFEGQEEDSSTKTEASSASSVSPA) the chain is Cytoplasmic. A lipid anchor (S-palmitoyl cysteine) is attached at cysteine 320. Positions 326–347 (EGQEEDSSTKTEASSASSVSPA) are disordered. The segment covering 335–347 (KTEASSASSVSPA) has biased composition (low complexity).

Belongs to the G-protein coupled receptor 1 family. Opsin subfamily. Phosphorylated on some or all of the serine and threonine residues present in the C-terminal region. In terms of processing, contains one covalently linked retinal chromophore.

The protein localises to the membrane. It localises to the cell projection. Its subcellular location is the cilium. It is found in the photoreceptor outer segment. Functionally, photoreceptor required for image-forming vision at low light intensity. While most salt water fish species use retinal as chromophore, most freshwater fish use 3-dehydroretinal, or a mixture of retinal and 3-dehydroretinal. Light-induced isomerization of 11-cis to all-trans retinal triggers a conformational change that activates signaling via G-proteins. Subsequent receptor phosphorylation mediates displacement of the bound G-protein alpha subunit by arrestin and terminates signaling. In Sargocentron tiere (Blue lined squirrelfish), this protein is Rhodopsin (rho).